A 307-amino-acid chain; its full sequence is Isethionate sulfite-lyase activating enzyme (307 aa).

Residues 22–307 (HDGPGIRTVV…EAVVAQTADS (286 aa)) form the Radical SAM core domain. Cys36, Cys40, Cys43, Cys62, Cys68, Cys71, Cys75, Cys95, Cys98, Cys102, and Cys106 together coordinate [4Fe-4S] cluster. Position 42–44 (42–44 (WCS)) interacts with S-adenosyl-L-methionine. 4Fe-4S ferredoxin-type domains lie at 53–85 (VELAYNTGRCLTLAKCVRCVEICTAGAISRAED) and 86–117 (DTISIDRALCNDCEQLCSGACPSNALITYGAH). S-adenosyl-L-methionine is bound by residues Gly146, 195–197 (DIK), and His268.

This sequence belongs to the organic radical-activating enzymes family. In terms of assembly, monomer. Requires [4Fe-4S] cluster as cofactor.

It catalyses the reaction glycyl-[protein] + reduced [flavodoxin] + S-adenosyl-L-methionine = glycin-2-yl radical-[protein] + semiquinone [flavodoxin] + 5'-deoxyadenosine + L-methionine + H(+). The protein operates within organosulfur degradation; alkanesulfonate degradation. Its function is as follows. Involved in an anaerobic respiration pathway that converts the sulfonate isethionate (2-hydroxyethanesulfonate) to ammonia, acetate and sulfide. Catalyzes activation of the isethionate sulfite-lyase IseG under anaerobic conditions by generation of an organic free radical on a glycine residue, via a homolytic cleavage of S-adenosyl-L-methionine (SAM). The sequence is that of Isethionate sulfite-lyase activating enzyme from Nitratidesulfovibrio vulgaris (strain ATCC 29579 / DSM 644 / CCUG 34227 / NCIMB 8303 / VKM B-1760 / Hildenborough) (Desulfovibrio vulgaris).